A 332-amino-acid chain; its full sequence is MADKISVCVAGGGSWGTALGHLLARGGHDVSIWLRDDAVARTINRKHENPRYLPGLPLDPRLAATTDPAVLARPLVVLAVPCQQLRPWLAGHACHFQPGVTLVNAAKGIETGSLATCAEITAQELGGLNPRYAVLSGPSFAADVLRDLPTAVVLASYDEALGRYLRGVFSGPAFRCYSSTDVVGVEMGGALKNVMAIAAGTCDGLGLGANSRAALVTRGLAEMSRLGVARGAQAHTFMGLSGLGDLTLTCTDDLSRNRQVGLRLGRGEKLEHITQSLGMVAEGVKTTAAIHEMAQKLQVEAPLTRAVYGILYKEMAPPTVLSDLMARDLREE.

NADPH-binding residues include S14, W15, R35, and K107. Sn-glycerol 3-phosphate contacts are provided by K107, G137, and S139. A141 contributes to the NADPH binding site. 5 residues coordinate sn-glycerol 3-phosphate: K192, D245, S255, R256, and N257. K192 functions as the Proton acceptor in the catalytic mechanism. R256 provides a ligand contact to NADPH. 2 residues coordinate NADPH: V280 and E282.

The protein belongs to the NAD-dependent glycerol-3-phosphate dehydrogenase family.

The protein localises to the cytoplasm. The enzyme catalyses sn-glycerol 3-phosphate + NAD(+) = dihydroxyacetone phosphate + NADH + H(+). It carries out the reaction sn-glycerol 3-phosphate + NADP(+) = dihydroxyacetone phosphate + NADPH + H(+). It participates in membrane lipid metabolism; glycerophospholipid metabolism. Its function is as follows. Catalyzes the reduction of the glycolytic intermediate dihydroxyacetone phosphate (DHAP) to sn-glycerol 3-phosphate (G3P), the key precursor for phospholipid synthesis. This is Glycerol-3-phosphate dehydrogenase [NAD(P)+] from Desulfovibrio desulfuricans (strain ATCC 27774 / DSM 6949 / MB).